Here is a 368-residue protein sequence, read N- to C-terminus: GTPase Obg (368 aa).

The Obg domain occupies 1 to 159 (MQFIDQAEIE…RQLRLELKLL (159 aa)). Positions 160–328 (AEVGIIGLPN…LMQLVWQWLD (169 aa)) constitute an OBG-type G domain. Residues 166–173 (GLPNAGKS), 191–195 (FTTLV), 213–216 (DIPG), 280–283 (NKID), and 309–311 (SAA) each bind GTP. 2 residues coordinate Mg(2+): serine 173 and threonine 193.

The protein belongs to the TRAFAC class OBG-HflX-like GTPase superfamily. OBG GTPase family. In terms of assembly, monomer. Requires Mg(2+) as cofactor.

Its subcellular location is the cytoplasm. An essential GTPase which binds GTP, GDP and possibly (p)ppGpp with moderate affinity, with high nucleotide exchange rates and a fairly low GTP hydrolysis rate. Plays a role in control of the cell cycle, stress response, ribosome biogenesis and in those bacteria that undergo differentiation, in morphogenesis control. This Synechocystis sp. (strain ATCC 27184 / PCC 6803 / Kazusa) protein is GTPase Obg.